Consider the following 335-residue polypeptide: Casein kinase I (335 aa).

One can recognise a Protein kinase domain in the interval 9 to 278 (YRLGRKIGSG…LRRLFKDLFF (270 aa)). Residues 15–23 (IGSGSFGDI) and lysine 38 each bind ATP. Residue aspartate 128 is the Proton acceptor of the active site. A disordered region spans residues 304 to 335 (RSMVNQGAESGNQWRRDASGRDPLGRLPQLEP). Over residues 305–316 (SMVNQGAESGNQ) the composition is skewed to polar residues. Over residues 317–327 (WRRDASGRDPL) the composition is skewed to basic and acidic residues.

Belongs to the protein kinase superfamily. CK1 Ser/Thr protein kinase family. Casein kinase I subfamily.

The catalysed reaction is L-seryl-[protein] + ATP = O-phospho-L-seryl-[protein] + ADP + H(+). It catalyses the reaction L-threonyl-[protein] + ATP = O-phospho-L-threonyl-[protein] + ADP + H(+). Functionally, casein kinases are operationally defined by their preferential utilization of acidic proteins such as caseins as substrates. It can phosphorylate a large number of proteins. This chain is Casein kinase I, found in Eimeria tenella (Coccidian parasite).